A 357-amino-acid polypeptide reads, in one-letter code: Geranylgeranyl pyrophosphate synthase, chloroplastic (357 aa).

The transit peptide at 1–40 directs the protein to the chloroplast; the sequence is MRSNLCHPLKNQLPISFFLSGTIRKPIFSCSRLSISAIIT. The isopentenyl diphosphate site is built by Lys-106, Arg-109, and His-138. The Mg(2+) site is built by Asp-145 and Asp-151. Arg-156 is a binding site for dimethylallyl diphosphate. Arg-157 is an isopentenyl diphosphate binding site. 5 residues coordinate dimethylallyl diphosphate: Lys-242, Thr-243, Gln-280, Lys-297, and Lys-307.

This sequence belongs to the FPP/GGPP synthase family. Requires Mg(2+) as cofactor.

It is found in the plastid. The protein resides in the chloroplast. It carries out the reaction isopentenyl diphosphate + dimethylallyl diphosphate = (2E)-geranyl diphosphate + diphosphate. The catalysed reaction is isopentenyl diphosphate + (2E)-geranyl diphosphate = (2E,6E)-farnesyl diphosphate + diphosphate. It catalyses the reaction isopentenyl diphosphate + (2E,6E)-farnesyl diphosphate = (2E,6E,10E)-geranylgeranyl diphosphate + diphosphate. The protein operates within isoprenoid biosynthesis; farnesyl diphosphate biosynthesis; farnesyl diphosphate from geranyl diphosphate and isopentenyl diphosphate: step 1/1. It functions in the pathway isoprenoid biosynthesis; geranyl diphosphate biosynthesis; geranyl diphosphate from dimethylallyl diphosphate and isopentenyl diphosphate: step 1/1. Its pathway is isoprenoid biosynthesis; geranylgeranyl diphosphate biosynthesis; geranylgeranyl diphosphate from farnesyl diphosphate and isopentenyl diphosphate: step 1/1. Catalyzes the trans-addition of the three molecules of IPP onto DMAPP to form geranylgeranyl pyrophosphate. This Catharanthus roseus (Madagascar periwinkle) protein is Geranylgeranyl pyrophosphate synthase, chloroplastic (GGPS1).